The following is a 68-amino-acid chain: DNA-directed RNA polymerase subunit omega (68 aa).

The protein belongs to the RNA polymerase subunit omega family. In terms of assembly, the RNAP catalytic core consists of 2 alpha, 1 beta, 1 beta' and 1 omega subunit. When a sigma factor is associated with the core the holoenzyme is formed, which can initiate transcription.

It catalyses the reaction RNA(n) + a ribonucleoside 5'-triphosphate = RNA(n+1) + diphosphate. Promotes RNA polymerase assembly. Latches the N- and C-terminal regions of the beta' subunit thereby facilitating its interaction with the beta and alpha subunits. This chain is DNA-directed RNA polymerase subunit omega, found in Ruminiclostridium cellulolyticum (strain ATCC 35319 / DSM 5812 / JCM 6584 / H10) (Clostridium cellulolyticum).